The chain runs to 472 residues: Cysteine--tRNA ligase (472 aa).

C29 serves as a coordination point for Zn(2+). Residues 31–41 carry the 'HIGH' region motif; the sequence is PTVYNYIHIGN. C214, H239, and E243 together coordinate Zn(2+). The 'KMSKS' region motif lies at 273–277; sequence KMSKS. ATP is bound at residue K276.

Belongs to the class-I aminoacyl-tRNA synthetase family. In terms of assembly, monomer. The cofactor is Zn(2+).

It localises to the cytoplasm. It catalyses the reaction tRNA(Cys) + L-cysteine + ATP = L-cysteinyl-tRNA(Cys) + AMP + diphosphate. This Lactobacillus gasseri (strain ATCC 33323 / DSM 20243 / BCRC 14619 / CIP 102991 / JCM 1131 / KCTC 3163 / NCIMB 11718 / NCTC 13722 / AM63) protein is Cysteine--tRNA ligase.